The primary structure comprises 193 residues: Cytochrome c biogenesis ATP-binding export protein CcmA (193 aa).

Residues 9–191 (LSASGLAILR…AAGFPVTAEV (183 aa)) form the ABC transporter domain. ATP is bound at residue 41-48 (GANGAGKT).

This sequence belongs to the ABC transporter superfamily. CcmA exporter (TC 3.A.1.107) family. As to quaternary structure, the complex is composed of two ATP-binding proteins (CcmA) and two transmembrane proteins (CcmB).

The protein resides in the cell inner membrane. The enzyme catalyses heme b(in) + ATP + H2O = heme b(out) + ADP + phosphate + H(+). Its function is as follows. Part of the ABC transporter complex CcmAB involved in the biogenesis of c-type cytochromes; once thought to export heme, this seems not to be the case, but its exact role is uncertain. Responsible for energy coupling to the transport system. This chain is Cytochrome c biogenesis ATP-binding export protein CcmA, found in Hyphomonas neptunium (strain ATCC 15444).